A 93-amino-acid chain; its full sequence is Large ribosomal subunit protein uL23 (93 aa).

The protein belongs to the universal ribosomal protein uL23 family. In terms of assembly, part of the 50S ribosomal subunit. Contacts protein L29, and trigger factor when it is bound to the ribosome.

One of the early assembly proteins it binds 23S rRNA. One of the proteins that surrounds the polypeptide exit tunnel on the outside of the ribosome. Forms the main docking site for trigger factor binding to the ribosome. In Helicobacter pylori (strain P12), this protein is Large ribosomal subunit protein uL23.